Consider the following 318-residue polypeptide: Pyrimidine-specific ribonucleoside hydrolase RihA (318 aa).

Residue histidine 240 is part of the active site.

It belongs to the IUNH family. RihA subfamily.

In terms of biological role, hydrolyzes cytidine or uridine to ribose and cytosine or uracil, respectively. The chain is Pyrimidine-specific ribonucleoside hydrolase RihA from Shewanella baltica (strain OS155 / ATCC BAA-1091).